The sequence spans 351 residues: LIM/homeobox protein ceh-14 (351 aa).

LIM zinc-binding domains are found at residues alanine 46–threonine 105 and threonine 105–lysine 169. The segment at residues asparagine 180–lysine 239 is a DNA-binding region (homeobox). The segment covering leucine 238–serine 254 has biased composition (basic and acidic residues). A disordered region spans residues leucine 238 to proline 268. Polar residues predominate over residues aspartate 255–proline 268.

As to quaternary structure, interacts (via LIM zinc-binding domains 1 and 2) with lim-7 (via LID domain). May interact with itself. May interact with homeobox protein ceh-63. As to expression, expressed in the anterior AFDL/R sensory neurons and BDUL/R and ALA interneurons, and in PVT, PVQL/R, DVC, PVNL/R, PVWL/R, PVR, PHCL/R, PHAL/R and PHBL/R cells in the tail region.

Its subcellular location is the nucleus. Functionally, probable transcription factor, modulating expression of helix-loop-helix protein mbr-1 and homeobox protein ceh-63, perhaps acting in concert with ceh-63. Binds to a motif including the sequence 5'-CTAAT-3' in regulatory promoter elements. Confers thermosensory function to neurons. Required for correct AFD-mediated thermotaxis. In concert with homeobox protein ttx-1, perhaps as components in a complex, specifies identity of AFD neurons, acting by synergistically regulating receptor-type guanylyl cyclase gcy-8, gcy-18 and other genes. Involved in postembryonic differentiation of the ALA neuron, and regulation of genes that contribute to behavioral quiescence, a sleep-like behavior mediated by ALA. Regulates its own expression and also that of homeodomain ceh-17, together forming an autoregulatory loop in the ALA neuron. Required for initial pathfinding of the ALA axons, but largely dispensable for axon migration. Involved in regulating postembryonic axon maintenance in the ventral nerve cord, acting in concert with LIM homeobox protein lim-6, via modulation of expression of immunoglobulin domain zig genes in the interneuron PVT. Plays a role in controlling the peptidergic identity of the BDU neurons, regulating expression of flp-10, nlp-1, and nlp-15, thereby modulating the harsh touch response. The protein is LIM/homeobox protein ceh-14 (ceh-14) of Caenorhabditis elegans.